Reading from the N-terminus, the 335-residue chain is Methyltransferase pgmE (335 aa).

This sequence belongs to the methyltransferase superfamily.

It participates in pigment biosynthesis. Its pathway is secondary metabolite biosynthesis. Its function is as follows. Methyltransferase; part of the gene cluster that mediates the biosynthesis of pleosporalin A, ascomycone A, as well as a third cryptic naphthoquinone derived pigment, all responsible for the coloration of conidia. Essential for the production of pleosporalin A, but not the 2 other final products. The pathway begins with the biosynthesis of the cyclized heptaketide 3-acetonyl-1,6,8-trihydroxy-2-naphthaldehyde by the NR-PKS pgmA. The C-6 hydroxyl group is further methylated by the O-methyltransferase pgmB to yield fusarubinaldehyde which is in turn oxidized by the cytochrome P450 monooxygenase pgmC at C-9. The C-1 hydroxyl group is then methylated spontaneously. Although pgmE, pgmD and pgmH are essential for the production of pleosporalin A, it is not the case for the 2 other final products and it remains difficult to assign a specific function to each enzyme. PgmF and pgmG seem not to be involved in pigment biosynthesis although they were regulated by the cluster-specific transcription factor pgmR. In Aspergillus terreus, this protein is Methyltransferase pgmE.